The chain runs to 655 residues: Protein npp-24 (655 aa).

The helical transmembrane segment at 263 to 283 (ICSVFVLVSGGGVLSHLVVFP) threads the bilayer.

The protein localises to the membrane. The sequence is that of Protein npp-24 from Caenorhabditis elegans.